The sequence spans 967 residues: Sulfite dehydrogenase subunit A (967 aa).

Residues 15–71 (VEVKETTCYMCACRCGIRVHLRDGEVRYIDGNPNHPLNKGVICAKGSSGIMKQYSPG) form the 4Fe-4S Mo/W bis-MGD-type domain. [4Fe-4S] cluster-binding residues include C22, C25, C29, and C57.

The protein belongs to the prokaryotic molybdopterin-containing oxidoreductase family. Forms a heterotrimeric membrane-bound complex composed of a catalytic heterodimer (SoeAB) and a membrane anchor protein (SoeC). Requires [4Fe-4S] cluster as cofactor. It depends on Mo-bis(molybdopterin guanine dinucleotide) as a cofactor.

It localises to the cell inner membrane. It catalyses the reaction a quinone + sulfite + H2O = a quinol + sulfate. The catalysed reaction is a menaquinone + sulfite + H2O = a menaquinol + sulfate. Functionally, part of the SoeABC complex that catalyzes the oxidation of sulfite to sulfate. The chain is Sulfite dehydrogenase subunit A from Allochromatium vinosum (strain ATCC 17899 / DSM 180 / NBRC 103801 / NCIMB 10441 / D) (Chromatium vinosum).